Here is a 203-residue protein sequence, read N- to C-terminus: Urease accessory protein UreG (203 aa).

14–21 (GPVGSGKT) serves as a coordination point for GTP.

It belongs to the SIMIBI class G3E GTPase family. UreG subfamily. As to quaternary structure, homodimer. UreD, UreF and UreG form a complex that acts as a GTP-hydrolysis-dependent molecular chaperone, activating the urease apoprotein by helping to assemble the nickel containing metallocenter of UreC. The UreE protein probably delivers the nickel.

Its subcellular location is the cytoplasm. Functionally, facilitates the functional incorporation of the urease nickel metallocenter. This process requires GTP hydrolysis, probably effectuated by UreG. The sequence is that of Urease accessory protein UreG from Rhizobium leguminosarum bv. viciae.